Here is a 64-residue protein sequence, read N- to C-terminus: Alpha-conotoxin-like Ai1.2 (64 aa).

The signal sequence occupies residues 1–17 (MFTVFLLVVLATTVVSS). The propeptide occupies 18–43 (TSGRRAFRGRNAAAKASGLVGLTDRR). Intrachain disulfides connect C46–C52 and C47–C60. The interval 48–50 (SDP) is ser-Xaa-Pro motif, crucial for potent interaction with nAChR. G61 is subject to Glycine amide.

Belongs to the conotoxin A superfamily. Expressed by the venom duct.

The protein localises to the secreted. Its function is as follows. Alpha-conotoxins act on postsynaptic membranes, they bind to the nicotinic acetylcholine receptors (nAChR) and thus inhibit them. This is Alpha-conotoxin-like Ai1.2 from Conus ammiralis (Admiral cone).